The sequence spans 201 residues: UPF0301 protein RHECIAT_CH0001061 (201 aa).

It belongs to the UPF0301 (AlgH) family.

The protein is UPF0301 protein RHECIAT_CH0001061 of Rhizobium etli (strain CIAT 652).